Reading from the N-terminus, the 333-residue chain is Glycerol-3-phosphate dehydrogenase [NAD(P)+] (333 aa).

3 residues coordinate NADPH: tryptophan 11, arginine 30, and lysine 105. Residues lysine 105, glycine 133, and serine 135 each contribute to the sn-glycerol 3-phosphate site. Residue alanine 137 coordinates NADPH. Sn-glycerol 3-phosphate contacts are provided by lysine 188, aspartate 241, serine 251, arginine 252, and asparagine 253. Catalysis depends on lysine 188, which acts as the Proton acceptor. Arginine 252 provides a ligand contact to NADPH. NADPH contacts are provided by valine 276 and glutamate 278.

The protein belongs to the NAD-dependent glycerol-3-phosphate dehydrogenase family.

It is found in the cytoplasm. The catalysed reaction is sn-glycerol 3-phosphate + NAD(+) = dihydroxyacetone phosphate + NADH + H(+). The enzyme catalyses sn-glycerol 3-phosphate + NADP(+) = dihydroxyacetone phosphate + NADPH + H(+). It participates in membrane lipid metabolism; glycerophospholipid metabolism. Functionally, catalyzes the reduction of the glycolytic intermediate dihydroxyacetone phosphate (DHAP) to sn-glycerol 3-phosphate (G3P), the key precursor for phospholipid synthesis. In Methylibium petroleiphilum (strain ATCC BAA-1232 / LMG 22953 / PM1), this protein is Glycerol-3-phosphate dehydrogenase [NAD(P)+].